Consider the following 323-residue polypeptide: Fatty acid desaturase 4, chloroplastic (323 aa).

The N-terminal 77 residues, 1-77, are a transit peptide targeting the chloroplast; sequence MAVSLPTKYP…PRPNREKLVV (77 aa). The next 2 membrane-spanning stretches (helical) occupy residues 101 to 121 and 131 to 151; these read WVAA…IGGF and LAGY…HWAI. Positions 170–173 match the Histidine box-1 motif; the sequence is QGHH. The helical transmembrane segment at 204–224 threads the bilayer; sequence LAFNDPVFHGFVCTFAFCILF. The Histidine box-2 signature appears at 229–233; it reads HAWAH. The Histidine box-3 signature appears at 258 to 262; that stretch reads HAEHH.

It belongs to the fatty acid desaturase CarF family. Requires Fe(2+) as cofactor.

Its subcellular location is the plastid. The protein localises to the chloroplast membrane. It carries out the reaction a 1-acyl-2-hexadecanoyl-glycerolipid + 2 reduced [2Fe-2S]-[ferredoxin] + O2 + 2 H(+) = a 1-acyl-2-[(3E)-hexadec-3-enoyl]-glycerolipid + 2 oxidized [2Fe-2S]-[ferredoxin] + 2 H2O. Its pathway is lipid metabolism; fatty acid metabolism. Its function is as follows. Fatty acid desaturase involved in the production of chloroplast-specific phosphatidylglycerol molecular species containing 16:1(3E). Catalyzes the formation of a trans double bond introduced close to the carboxyl group of palmitic acid, which is specifically esterified to the sn-2 glyceryl carbon of phosphatidylglycerol. The chain is Fatty acid desaturase 4, chloroplastic from Arabidopsis thaliana (Mouse-ear cress).